The sequence spans 683 residues: Cytochrome P450 monooxygenase htyF (683 aa).

A helical membrane pass occupies residues 8–28 (PALLAASVVLAVSLVSYVIQL). Residue Asn-29 is glycosylated (N-linked (GlcNAc...) asparagine). Cys-481 is a heme binding site. An N-linked (GlcNAc...) asparagine glycan is attached at Asn-581. The chain crosses the membrane as a helical span at residues 588-608 (LYVFVVLVACVAALFIGIGIY).

Belongs to the cytochrome P450 family. Heme serves as cofactor.

The protein resides in the membrane. It participates in antifungal biosynthesis. Functionally, cytochrome P450 monooxygenase; part of the gene cluster that mediates the de novo generation of L-homotyrosine from acetyl-CoA and 4-hydroxyphenyl-pyruvate. L-homotyrosine is a building block of echinocandin B, a fungal lipidated cyclic hexapeptide that acts as an antifungal agent. L-homotyrosine 4-hydroxyphenyl-pyruvate first undergoes an aldol-type condensation by htyA with the C-2 of acetyl-CoA followed by the release of CoA to form 2-(4-hydroxybenzyl)-malate. This is followed by isomerization of 2-(4-hydroxy-benzyl)-malate to 3-(4-hydroxybenzyl)-malate by htyD. Thereafter, 3-(4-hydroxybenzyl)-malate undergoes decarboxylation and oxidation to form 2-oxo-4-(4-hydroxybenzyl)butanoic acid, coupled to reduction of NAD(+) to NADH by htyC. The product then undergoes transamination catalyzed by htyB to form L-homotyrosine. This Aspergillus rugulosus (Emericella rugulosa) protein is Cytochrome P450 monooxygenase htyF.